We begin with the raw amino-acid sequence, 201 residues long: MYDYIKGTVTTITPEYIVVEAGQIGYQIITGNPFSFQRLEGTEAQVFLYQHVREDNISLFGFQTTEERYLFKKLLSVSGIGPKSALAIIASGDVVPLISAIESEDDVYLTKFPSVGKKTARQIILDLKGKLADVVASEIVYVAPENDMVAGLSPQLEEAVLALEALGYSTRELKKVIPKLSKEEDLTSDAYIKLALQLMTK.

Residues 1 to 63 form a domain I region; that stretch reads MYDYIKGTVT…EDNISLFGFQ (63 aa). A domain II region spans residues 64–142; it reads TTEERYLFKK…DVVASEIVYV (79 aa). The interval 143-153 is flexible linker; that stretch reads APENDMVAGLS. Residues 153–201 are domain III; the sequence is SPQLEEAVLALEALGYSTRELKKVIPKLSKEEDLTSDAYIKLALQLMTK.

It belongs to the RuvA family. Homotetramer. Forms an RuvA(8)-RuvB(12)-Holliday junction (HJ) complex. HJ DNA is sandwiched between 2 RuvA tetramers; dsDNA enters through RuvA and exits via RuvB. An RuvB hexamer assembles on each DNA strand where it exits the tetramer. Each RuvB hexamer is contacted by two RuvA subunits (via domain III) on 2 adjacent RuvB subunits; this complex drives branch migration. In the full resolvosome a probable DNA-RuvA(4)-RuvB(12)-RuvC(2) complex forms which resolves the HJ.

It localises to the cytoplasm. In terms of biological role, the RuvA-RuvB-RuvC complex processes Holliday junction (HJ) DNA during genetic recombination and DNA repair, while the RuvA-RuvB complex plays an important role in the rescue of blocked DNA replication forks via replication fork reversal (RFR). RuvA specifically binds to HJ cruciform DNA, conferring on it an open structure. The RuvB hexamer acts as an ATP-dependent pump, pulling dsDNA into and through the RuvAB complex. HJ branch migration allows RuvC to scan DNA until it finds its consensus sequence, where it cleaves and resolves the cruciform DNA. The polypeptide is Holliday junction branch migration complex subunit RuvA (Listeria monocytogenes serotype 4b (strain CLIP80459)).